Here is a 407-residue protein sequence, read N- to C-terminus: Phosphopentomutase (407 aa).

Mn(2+) contacts are provided by Asp10, Asp306, His311, Asp347, His348, and His359.

This sequence belongs to the phosphopentomutase family. Requires Mn(2+) as cofactor.

It localises to the cytoplasm. The catalysed reaction is 2-deoxy-alpha-D-ribose 1-phosphate = 2-deoxy-D-ribose 5-phosphate. The enzyme catalyses alpha-D-ribose 1-phosphate = D-ribose 5-phosphate. It functions in the pathway carbohydrate degradation; 2-deoxy-D-ribose 1-phosphate degradation; D-glyceraldehyde 3-phosphate and acetaldehyde from 2-deoxy-alpha-D-ribose 1-phosphate: step 1/2. In terms of biological role, isomerase that catalyzes the conversion of deoxy-ribose 1-phosphate (dRib-1-P) and ribose 1-phosphate (Rib-1-P) to deoxy-ribose 5-phosphate (dRib-5-P) and ribose 5-phosphate (Rib-5-P), respectively. This is Phosphopentomutase from Erwinia tasmaniensis (strain DSM 17950 / CFBP 7177 / CIP 109463 / NCPPB 4357 / Et1/99).